The following is a 463-amino-acid chain: Nuclear hormone receptor family member nhr-3 (463 aa).

Positions 50–125 (STICSVCCDE…VGMEPDAIRP (76 aa)) form a DNA-binding region, nuclear receptor. 2 consecutive NR C4-type zinc fingers follow at residues 53-73 (CSVC…CFGC) and 89-113 (CRYS…FQKC). Residues 121–131 (DAIRPDRDKTG) are compositionally biased toward basic and acidic residues. The interval 121-143 (DAIRPDRDKTGRQKNPRRNTEGS) is disordered. The region spanning 199 to 462 (EIENIVIQLQ…VLEELLFLDR (264 aa)) is the NR LBD domain.

Belongs to the nuclear hormone receptor family.

It is found in the nucleus. In terms of biological role, orphan nuclear receptor. In Caenorhabditis elegans, this protein is Nuclear hormone receptor family member nhr-3 (nhr-3).